A 175-amino-acid chain; its full sequence is Ferritin light chain (175 aa).

Residues 7–156 (QNYSPEVEAA…DHLTNIRRLS (150 aa)) enclose the Ferritin-like diiron domain. E54, E57, E58, E61, and E64 together coordinate Fe cation.

It belongs to the ferritin family. As to quaternary structure, oligomer of 24 subunits. There are two types of subunits: L (light) chain and H (heavy) chain. The major chain can be light or heavy, depending on the species and tissue type. The functional molecule forms a roughly spherical shell with a diameter of 12 nm and contains a central cavity into which the insoluble mineral iron core is deposited. Interacts with NCOA4.

The protein resides in the cytoplasmic vesicle. Its subcellular location is the autophagosome. It is found in the cytoplasm. It localises to the autolysosome. Its function is as follows. Stores iron in a soluble, non-toxic, readily available form. Important for iron homeostasis. Iron is taken up in the ferrous form and deposited as ferric hydroxides after oxidation. Also plays a role in delivery of iron to cells. Mediates iron uptake in capsule cells of the developing kidney. Delivery to lysosomes by the cargo receptor NCOA4 for autophagic degradation and release or iron. This is Ferritin light chain (FTL) from Oryctolagus cuniculus (Rabbit).